A 931-amino-acid chain; its full sequence is Protocadherin gamma-A4 (931 aa).

An N-terminal signal peptide occupies residues 1–28; that stretch reads MAAPPARPDHTRLLHICLLLGVLVEIRA. Cadherin domains are found at residues 29–133, 134–242, 243–347, 348–452, 453–567, and 570–682; these read EQIR…PPSF, GTEQ…APVF, TQPE…APEV, TVTS…PPTF, PHAS…YPTF, and DDST…KPSA. The Extracellular portion of the chain corresponds to 29–692; that stretch reads EQIRYSVFEE…DPDDSGLTLY (664 aa). Residues Asn-419 and Asn-545 are each glycosylated (N-linked (GlcNAc...) asparagine). The chain crosses the membrane as a helical span at residues 693–713; sequence LVVSVAAVSCVFLAFVTVLLA. At 714-931 the chain is on the cytoplasmic side; the sequence is LKLRRWHKSR…KKKSGKKEKK (218 aa). Disordered stretches follow at residues 801–840 and 901–931; these read KGDP…WPNN and ATLT…KEKK. Residues 805–840 show a composition bias toward polar residues; that stretch reads NLQQAPPNTDWRFSQAQRPGTSGSQNGDDTGTWPNN. Positions 921 to 931 are enriched in basic residues; that stretch reads NKKKSGKKEKK.

Its subcellular location is the cell membrane. Its function is as follows. Potential calcium-dependent cell-adhesion protein. May be involved in the establishment and maintenance of specific neuronal connections in the brain. This Pan troglodytes (Chimpanzee) protein is Protocadherin gamma-A4 (PCDHGA4).